Consider the following 616-residue polypeptide: Methylmalonyl-CoA mutase small subunit (616 aa).

It belongs to the methylmalonyl-CoA mutase family. Heterodimer of an alpha and a beta chain. It depends on adenosylcob(III)alamin as a cofactor.

The catalysed reaction is (R)-methylmalonyl-CoA = succinyl-CoA. The protein operates within metabolic intermediate metabolism; propanoyl-CoA degradation; succinyl-CoA from propanoyl-CoA: step 3/3. Functionally, catalyzes the isomerization of succinyl-CoA to methylmalonyl-CoA during synthesis of propionate from tricarboxylic acid-cycle intermediates. This conversion most likely represents an important source of building blocks for polyketide antibiotic biosynthesis. It is unable to catalyze the conversion of isobutyryl-CoA into N-butyryl-CoA. This Streptomyces virginiae (Streptomyces cinnamonensis) protein is Methylmalonyl-CoA mutase small subunit (mutA).